Reading from the N-terminus, the 219-residue chain is Cytochrome c oxidase assembly protein CtaG (219 aa).

Residues 1-13 are compositionally biased toward polar residues; that stretch reads MDATDQGKSTSTT. The segment at 1–24 is disordered; that stretch reads MDATDQGKSTSTTAAQAAPGKAAP. Topologically, residues 1 to 29 are cytoplasmic; sequence MDATDQGKSTSTTAAQAAPGKAAPRRGIG. A compositionally biased stretch (low complexity) spans 14-24; the sequence is AAQAAPGKAAP. Residues 30–52 traverse the membrane as a helical; Signal-anchor for type II membrane protein segment; it reads RDALVGGICGAVVVLMIGASYAA. Residues 53–219 are Periplasmic-facing; it reads VPFYNWFCRA…GEPDKPRGSL (167 aa).

It belongs to the COX11/CtaG family.

It localises to the cell inner membrane. Exerts its effect at some terminal stage of cytochrome c oxidase synthesis, probably by being involved in the insertion of the copper B into subunit I. The chain is Cytochrome c oxidase assembly protein CtaG from Bradyrhizobium sp. (strain ORS 278).